The following is a 66-amino-acid chain: Clarkitoxin-I-Mdum (66 aa).

4 disulfide bridges follow: Cys3–Cys24, Cys17–Cys42, Cys46–Cys59, and Cys60–Cys65.

Expressed by the venom gland.

The protein resides in the secreted. In terms of biological role, no toxicity is observed upon intravenous or intracerebroventricular injection into mice. Has no cytotoxic activity towards C2C12 cells at 100 ug/ml. The sequence is that of Clarkitoxin-I-Mdum from Micrurus dumerilii (Coral snake).